A 234-amino-acid chain; its full sequence is LexA repressor (234 aa).

The H-T-H motif DNA-binding region spans 26–46 (FEEMKEALDLKSKSGVHRLIS). Residues 73–100 (AVGKAAPVSQREAANTNSALPPLRAAPK) form a disordered region. Over residues 91–100 (ALPPLRAAPK) the composition is skewed to low complexity. Active-site for autocatalytic cleavage activity residues include S154 and K192.

Belongs to the peptidase S24 family. In terms of assembly, homodimer.

The catalysed reaction is Hydrolysis of Ala-|-Gly bond in repressor LexA.. Represses a number of genes involved in the response to DNA damage (SOS response), including recA and lexA. In the presence of single-stranded DNA, RecA interacts with LexA causing an autocatalytic cleavage which disrupts the DNA-binding part of LexA, leading to derepression of the SOS regulon and eventually DNA repair. The chain is LexA repressor from Novosphingobium aromaticivorans (strain ATCC 700278 / DSM 12444 / CCUG 56034 / CIP 105152 / NBRC 16084 / F199).